Here is a 451-residue protein sequence, read N- to C-terminus: Tubulin alpha-2 chain (451 aa).

Gln11 provides a ligand contact to GTP. Lys40 bears the N6-acetyllysine mark. Glu71, Gly144, Thr145, Thr179, Asn206, and Asn228 together coordinate GTP. Glu71 serves as a coordination point for Mg(2+). Glu254 is a catalytic residue.

It belongs to the tubulin family. Dimer of alpha and beta chains. A typical microtubule is a hollow water-filled tube with an outer diameter of 25 nm and an inner diameter of 15 nM. Alpha-beta heterodimers associate head-to-tail to form protofilaments running lengthwise along the microtubule wall with the beta-tubulin subunit facing the microtubule plus end conferring a structural polarity. Microtubules usually have 13 protofilaments but different protofilament numbers can be found in some organisms and specialized cells. It depends on Mg(2+) as a cofactor. Post-translationally, undergoes a tyrosination/detyrosination cycle, the cyclic removal and re-addition of a C-terminal tyrosine residue by the enzymes tubulin tyrosine carboxypeptidase (TTCP) and tubulin tyrosine ligase (TTL), respectively.

It is found in the cytoplasm. The protein localises to the cytoskeleton. The catalysed reaction is GTP + H2O = GDP + phosphate + H(+). Tubulin is the major constituent of microtubules, a cylinder consisting of laterally associated linear protofilaments composed of alpha- and beta-tubulin heterodimers. Microtubules grow by the addition of GTP-tubulin dimers to the microtubule end, where a stabilizing cap forms. Below the cap, tubulin dimers are in GDP-bound state, owing to GTPase activity of alpha-tubulin. This Chlamydomonas reinhardtii (Chlamydomonas smithii) protein is Tubulin alpha-2 chain (TUBA2).